Here is an 85-residue protein sequence, read N- to C-terminus: MRTKAEIIKEFGKSEADTGSTEVQIALLTEKINHLTEHLRVHKKDFHSRLGLLKMVGQRKRLLAYLTKKDLEGYRALIAKLGIRK.

This sequence belongs to the universal ribosomal protein uS15 family. Part of the 30S ribosomal subunit. Forms a bridge to the 50S subunit in the 70S ribosome, contacting the 23S rRNA.

Its function is as follows. One of the primary rRNA binding proteins, it binds directly to 16S rRNA where it helps nucleate assembly of the platform of the 30S subunit by binding and bridging several RNA helices of the 16S rRNA. In terms of biological role, forms an intersubunit bridge (bridge B4) with the 23S rRNA of the 50S subunit in the ribosome. This Fusobacterium nucleatum subsp. nucleatum (strain ATCC 25586 / DSM 15643 / BCRC 10681 / CIP 101130 / JCM 8532 / KCTC 2640 / LMG 13131 / VPI 4355) protein is Small ribosomal subunit protein uS15.